The primary structure comprises 86 residues: Small nuclear ribonucleoprotein F (86 aa).

Ser2 carries the post-translational modification N-acetylserine. Residues 6–78 (NPKPFLNGLT…VLYIRGVEEE (73 aa)) form the Sm domain.

Belongs to the snRNP Sm proteins family. SmF/LSm6 subfamily. As to quaternary structure, core component of the spliceosomal U1, U2, U4 and U5 small nuclear ribonucleoproteins (snRNPs), the building blocks of the spliceosome. Most spliceosomal snRNPs contain a common set of Sm proteins, SNRPB, SNRPD1, SNRPD2, SNRPD3, SNRPE, SNRPF and SNRPG that assemble in a heptameric protein ring on the Sm site of the small nuclear RNA to form the core snRNP. Component of the U1 snRNP. The U1 snRNP is composed of the U1 snRNA and the 7 core Sm proteins SNRPB, SNRPD1, SNRPD2, SNRPD3, SNRPE, SNRPF and SNRPG, and at least three U1 snRNP-specific proteins SNRNP70/U1-70K, SNRPA/U1-A and SNRPC/U1-C. Component of the U4/U6-U5 tri-snRNP complex composed of the U4, U6 and U5 snRNAs and at least PRPF3, PRPF4, PRPF6, PRPF8, PRPF31, SNRNP200, TXNL4A, SNRNP40, SNRPB, SNRPD1, SNRPD2, SNRPD3, SNRPE, SNRPF, SNRPG, DDX23, CD2BP2, PPIH, SNU13, EFTUD2, SART1 and USP39, plus LSM2, LSM3, LSM4, LSM5, LSM6, LSM7 and LSM8. Component of the U7 snRNP complex, or U7 Sm protein core complex, that is composed of the U7 snRNA and at least LSM10, LSM11, SNRPB, SNRPD3, SNRPE, SNRPF and SNRPG; the complex does not contain SNRPD1 and SNRPD2. Component of the minor spliceosome, which splices U12-type introns. Part of the SMN-Sm complex that contains SMN1, GEMIN2/SIP1, DDX20/GEMIN3, GEMIN4, GEMIN5, GEMIN6, GEMIN7, GEMIN8, STRAP/UNRIP and the Sm proteins SNRPB, SNRPD1, SNRPD2, SNRPD3, SNRPE, SNRPF and SNRPG; catalyzes core snRNPs assembly. Forms a 6S pICln-Sm complex composed of CLNS1A/pICln, SNRPD1, SNRPD2, SNRPE, SNRPF and SNRPG; ring-like structure where CLNS1A/pICln mimics additional Sm proteins and which is unable to assemble into the core snRNP. Interacts with GEMIN2 (via N-terminus); the interaction is direct. Interacts with SNRPD2; the interaction is direct. Interacts with SNRPE; the interaction is direct.

The protein resides in the cytoplasm. It localises to the cytosol. Its subcellular location is the nucleus. In terms of biological role, plays a role in pre-mRNA splicing as a core component of the spliceosomal U1, U2, U4 and U5 small nuclear ribonucleoproteins (snRNPs), the building blocks of the spliceosome. Component of both the pre-catalytic spliceosome B complex and activated spliceosome C complexes. As a component of the minor spliceosome, involved in the splicing of U12-type introns in pre-mRNAs. As part of the U7 snRNP it is involved in histone 3'-end processing. The protein is Small nuclear ribonucleoprotein F (SNRPF) of Homo sapiens (Human).